Here is a 215-residue protein sequence, read N- to C-terminus: Cytochrome b6 (215 aa).

Residues 32 to 52 form a helical membrane-spanning segment; it reads IFYCLGGITLTCFLVQVATGF. Position 35 (cysteine 35) interacts with heme c. Positions 86 and 100 each coordinate heme b. The next 3 helical transmembrane spans lie at 90-110, 116-136, and 186-206; these read ASMMVLMMILHVFRVYLTGGF, LTWVTGVVLGVLTASFGVTGY, and LHTFVLPLLTAVFMLMHFSMI. Residues histidine 187 and histidine 202 each coordinate heme b.

Belongs to the cytochrome b family. PetB subfamily. The 4 large subunits of the cytochrome b6-f complex are cytochrome b6, subunit IV (17 kDa polypeptide, PetD), cytochrome f and the Rieske protein, while the 4 small subunits are PetG, PetL, PetM and PetN. The complex functions as a dimer. It depends on heme b as a cofactor. The cofactor is heme c.

The protein localises to the plastid. Its subcellular location is the chloroplast thylakoid membrane. Its function is as follows. Component of the cytochrome b6-f complex, which mediates electron transfer between photosystem II (PSII) and photosystem I (PSI), cyclic electron flow around PSI, and state transitions. The polypeptide is Cytochrome b6 (Lotus japonicus (Lotus corniculatus var. japonicus)).